A 37-amino-acid chain; its full sequence is Cytochrome b6-f complex subunit 5 (37 aa).

A helical transmembrane segment spans residues 5–25 (LLSGIVLGLIPITLAGLFVTA).

It belongs to the PetG family. In terms of assembly, the 4 large subunits of the cytochrome b6-f complex are cytochrome b6, subunit IV (17 kDa polypeptide, PetD), cytochrome f and the Rieske protein, while the 4 small subunits are PetG, PetL, PetM and PetN. The complex functions as a dimer.

It localises to the plastid. The protein localises to the chloroplast thylakoid membrane. Its function is as follows. Component of the cytochrome b6-f complex, which mediates electron transfer between photosystem II (PSII) and photosystem I (PSI), cyclic electron flow around PSI, and state transitions. PetG is required for either the stability or assembly of the cytochrome b6-f complex. The sequence is that of Cytochrome b6-f complex subunit 5 from Zygnema circumcarinatum (Green alga).